The sequence spans 248 residues: UDP-N-acetyl-D-mannosaminuronic acid transferase (248 aa).

This sequence belongs to the glycosyltransferase 26 family.

It catalyses the reaction UDP-N-acetyl-alpha-D-mannosaminouronate + N-acetyl-alpha-D-glucosaminyl-di-trans,octa-cis-undecaprenyl diphosphate = beta-D-ManNAcA-(1-&gt;4)-alpha-D-GlcNAc-di-trans,octa-cis-undecaprenyl diphosphate + UDP + H(+). It participates in bacterial outer membrane biogenesis; enterobacterial common antigen biosynthesis. In terms of biological role, catalyzes the synthesis of Und-PP-GlcNAc-ManNAcA (Lipid II), the second lipid-linked intermediate involved in enterobacterial common antigen (ECA) synthesis. The protein is UDP-N-acetyl-D-mannosaminuronic acid transferase of Klebsiella pneumoniae subsp. pneumoniae (strain ATCC 700721 / MGH 78578).